The following is a 736-amino-acid chain: Nucleoporin nup60 (736 aa).

Positions 1 to 46 (MSSGPIRTLHKGKAARNRTPYDRIAASKDGNHSNGPQTPSKSIFQR) are disordered. The segment covering 19–31 (TPYDRIAASKDGN) has biased composition (basic and acidic residues). Positions 32–43 (HSNGPQTPSKSI) are enriched in polar residues. Phosphoserine is present on residues serine 157, serine 159, serine 161, and serine 162. Disordered regions lie at residues 178–210 (RAAA…NSAK), 295–321 (DTSF…KTPS), 338–519 (TPSI…PNET), 565–614 (AVTD…RSLF), and 647–701 (EQAE…FPKF). Composition is skewed to polar residues over residues 196–210 (RTSS…NSAK) and 295–314 (DTSF…TTAN). A compositionally biased stretch (basic and acidic residues) spans 375–397 (QIRPSSEKSEPEKKEPSAFETLE). Positions 456–473 (SATTDKPSPPVSSIFSFN) are enriched in polar residues. 2 stretches are compositionally biased toward low complexity: residues 474–505 (APSA…TSFS) and 573–587 (EVSS…TMIS). The segment covering 588–597 (QPNTGFSFGS) has biased composition (polar residues). The segment covering 664 to 692 (EVEKPSAEGTNEHKQDATMTLEKTDKQGS) has biased composition (basic and acidic residues).

As to quaternary structure, component of the nuclear pore complex (NPC). NPC constitutes the exclusive means of nucleocytoplasmic transport. NPCs allow the passive diffusion of ions and small molecules and the active, nuclear transport receptor-mediated bidirectional transport of macromolecules such as proteins, RNAs, ribonucleoparticles (RNPs), and ribosomal subunits across the nuclear envelope.

It is found in the nucleus. The protein localises to the nuclear pore complex. Its subcellular location is the nucleus membrane. Functions as a component of the nuclear pore complex (NPC). NPC components, collectively referred to as nucleoporins (NUPs), can play the role of both NPC structural components and of docking or interaction partners for transiently associated nuclear transport factors. Active directional transport is assured by both, a Phe-Gly (FG) repeat affinity gradient for these transport factors across the NPC and a transport cofactor concentration gradient across the nuclear envelope. This is Nucleoporin nup60 (nup60) from Schizosaccharomyces pombe (strain 972 / ATCC 24843) (Fission yeast).